The primary structure comprises 743 residues: Dynein regulatory complex protein 1 homolog (743 aa).

Acidic residues-rich tracts occupy residues 1 to 10 (MDDNEDELEE) and 19 to 28 (SVEEEEEVEP). Residues 1–34 (MDDNEDELEEHQELVSDGSVEEEEEVEPDLGPVD) form a disordered region. Coiled coils occupy residues 175–332 (DQIE…VLMN) and 395–416 (KLHS…NNRE). Residues 599–620 (NRLQGAAGGQPDEKEHRSTGDT) form a disordered region. Residues 715–742 (KMRVQYDAEVVFLRRQNEELRHLLQKFT) are a coiled coil.

Belongs to the DRC1 family.

In Drosophila melanogaster (Fruit fly), this protein is Dynein regulatory complex protein 1 homolog.